Consider the following 629-residue polypeptide: Chaperone protein DnaK (629 aa).

Phosphothreonine; by autocatalysis is present on T195. Disordered regions lie at residues 514 to 533 (EAEQNAEADRKRRERVEKRN) and 543 to 629 (LGQL…KPAE). The segment covering 555–590 (DAKDRLKAAADEAEEAVRSDDDSRIERAQKQLEEAM) has biased composition (basic and acidic residues). Positions 595–614 (TAAQSGSQNQAGQGAQTQTG) are enriched in low complexity. Over residues 615-629 (RQEDDVIDADFKPAE) the composition is skewed to basic and acidic residues.

It belongs to the heat shock protein 70 family.

Acts as a chaperone. The protein is Chaperone protein DnaK of Deinococcus geothermalis (strain DSM 11300 / CIP 105573 / AG-3a).